The sequence spans 614 residues: Sodium- and chloride-dependent betaine transporter (614 aa).

The interval 1–33 (MDRKVAVPEDGPPVVSWLPEEGEKLDQEGEDQV) is disordered. Residues 1–44 (MDRKVAVPEDGPPVVSWLPEEGEKLDQEGEDQVKDRGQWTNKME) are Cytoplasmic-facing. Residues 21–33 (EGEKLDQEGEDQV) show a composition bias toward basic and acidic residues. The next 3 helical transmembrane spans lie at 45–65 (FVLS…FPYL), 73–92 (AFFI…VFFL), and 117–137 (GIGL…IIIL). Topologically, residues 138–210 (AWALFYLFSS…SGIHDLGALR (73 aa)) are extracellular. A disulfide bridge links Cys-157 with Cys-166. N-linked (GlcNAc...) asparagine glycans are attached at residues Asn-171 and Asn-183. The next 9 helical transmembrane spans lie at 211–229 (WELA…FCIW), 238–255 (VVYF…ILLI), 291–308 (IFFS…LGSY), 320–341 (IALC…FSIL), 374–393 (MPLS…FLGL), 423–441 (LLIL…FLVT), 458–478 (GICL…VYGA), 499–518 (ISWL…FSLS), and 538–556 (IGWF…FVII). Residues 557–614 (TLLKTRGSFKKRLRQLTTPDPSLPQPKQHLYLDGGTSQDCGPSPTKEGLIVGEKETHL) are Cytoplasmic-facing. A disordered region spans residues 591–614 (GTSQDCGPSPTKEGLIVGEKETHL).

Belongs to the sodium:neurotransmitter symporter (SNF) (TC 2.A.22) family. SLC6A12 subfamily. As to quaternary structure, interacts with LIN7C. As to expression, kidney.

Its subcellular location is the basolateral cell membrane. The protein localises to the cell membrane. The enzyme catalyses 4-aminobutanoate(out) + chloride(out) + 3 Na(+)(out) = 4-aminobutanoate(in) + chloride(in) + 3 Na(+)(in). The catalysed reaction is glycine betaine(out) + 2 chloride(out) + 3 Na(+)(out) = glycine betaine(in) + 2 chloride(in) + 3 Na(+)(in). Its function is as follows. Transporter that mediates cellular uptake of betaine and GABA in a sodium- and chloride-dependent process. May have a role in regulation of GABAergic transmission in the brain through the reuptake of GABA into presynaptic terminals, as well as in osmotic regulation. Probably also involved in renal and hepatic osmotic regulation. The protein is Sodium- and chloride-dependent betaine transporter (SLC6A12) of Canis lupus familiaris (Dog).